A 122-amino-acid polypeptide reads, in one-letter code: Protein TCL1B3 (122 aa).

This sequence belongs to the TCL1 family.

This is Protein TCL1B3 (Tcl1b3) from Mus musculus (Mouse).